The chain runs to 476 residues: MFAAGLAPFYASNFSLWSAAYCSSAGPGGCSFALDPAAVKKPSFCIADILHAGVGEPGPAAEGLVGASAALTAHLGSVHPHASFQAAARSPLRPTPVVAPSEVPAGFPQRLSPLSAAFHQHLPQQSPTQQQQPQQQPPPPPRAVSLQPPTSGTRVVPHHSGSAPAPSSKDLKFGIDRILSAEFDPKVKEGNTLRDLTSLLTGGRPAGVHLAGLQPSAGQFFASLDPISEASAILSPLSSNPRNSVQHQFQDTFPGPYAVLTKDTMPQTYKRKRSWSRAVFSNLQRKGLEKRFEIQKYVTKPDRKQLAAMLGLTDAQVKVWFQNRRMKWRHSKEAQAQKDKDKEAGEKPSGGVPAEGEREERSPSRSEGEAESESSDSESLDMAPSDTERTEGTERSLHQTTVIKASAAGALITASSSTSGSSFSFSSTSSLGSGNTHVGSASSLGGNCSELPSAHQPSVTSSPQSPEIAQAPLAGL.

Disordered stretches follow at residues 120 to 169 (QHLP…PSSK), 328 to 401 (WRHS…HQTT), and 413 to 476 (TASS…LAGL). Low complexity-rich tracts occupy residues 123 to 134 (PQQSPTQQQQPQ) and 158 to 168 (HHSGSAPAPSS). The homeobox DNA-binding region spans 273 to 332 (RSWSRAVFSNLQRKGLEKRFEIQKYVTKPDRKQLAAMLGLTDAQVKVWFQNRRMKWRHSK). Composition is skewed to basic and acidic residues over residues 331 to 346 (SKEA…EAGE) and 355 to 368 (EGER…RSEG). The span at 369 to 379 (EAESESSDSES) shows a compositional bias: acidic residues. Over residues 386–397 (DTERTEGTERSL) the composition is skewed to basic and acidic residues. Residues 413 to 434 (TASSSTSGSSFSFSSTSSLGSG) are compositionally biased toward low complexity. Polar residues-rich tracts occupy residues 435–446 (NTHVGSASSLGG) and 455–467 (HQPS…QSPE).

This sequence belongs to the H2.0 homeobox family. As to expression, expressed in Th1 cells, CD8-positive T-cells, B-cells and NK cells.

Its subcellular location is the nucleus. Transcription factor required for TBX21/T-bet-dependent maturation of Th1 cells as well as maintenance of Th1-specific gene expression. Involved in embryogenesis and hematopoiesis. The sequence is that of H2.0-like homeobox protein (Hlx) from Mus musculus (Mouse).